A 187-amino-acid polypeptide reads, in one-letter code: Transmembrane protein 272 (187 aa).

The next 4 membrane-spanning stretches (helical) occupy residues 21-41 (CFVV…FIGM), 52-72 (LIPL…SLLL), 107-127 (IHLL…YWVF), and 149-169 (LYLF…LLLL).

It localises to the membrane. The chain is Transmembrane protein 272 from Homo sapiens (Human).